We begin with the raw amino-acid sequence, 156 residues long: Probable low-salt glycan biosynthesis epimerase Agl13 (156 aa).

Residues R19, E24, 39–41 (MSY), R51, H54, and H109 each bind substrate.

This sequence belongs to the dTDP-4-dehydrorhamnose 3,5-epimerase family.

It functions in the pathway protein modification; protein glycosylation. It participates in cell surface structure biogenesis; S-layer biogenesis. Epimerase involved in N-glycan biosynthetic pathway that takes place under low-salt conditions (1.75 M instead of 3.4 M). Participates in the formation of the tetrasaccharide present at 'Asn-532' of S-layer glycoprotein Csg, consisting of a sulfated hexose, 2 hexoses and rhamnose. Involved in the addition of final rhamnose (sugar 4) of the tetrasaccharide on the dolichol phosphate carrier. In Haloferax volcanii (strain ATCC 29605 / DSM 3757 / JCM 8879 / NBRC 14742 / NCIMB 2012 / VKM B-1768 / DS2) (Halobacterium volcanii), this protein is Probable low-salt glycan biosynthesis epimerase Agl13 (agl13).